Here is a 428-residue protein sequence, read N- to C-terminus: Enolase (428 aa).

Glutamine 163 lines the (2R)-2-phosphoglycerate pocket. Catalysis depends on glutamate 205, which acts as the Proton donor. Residues aspartate 242, glutamate 285, and aspartate 312 each contribute to the Mg(2+) site. (2R)-2-phosphoglycerate-binding residues include lysine 337, arginine 366, serine 367, and lysine 388. Catalysis depends on lysine 337, which acts as the Proton acceptor.

This sequence belongs to the enolase family. It depends on Mg(2+) as a cofactor.

The protein localises to the cytoplasm. It localises to the secreted. The protein resides in the cell surface. The enzyme catalyses (2R)-2-phosphoglycerate = phosphoenolpyruvate + H2O. Its pathway is carbohydrate degradation; glycolysis; pyruvate from D-glyceraldehyde 3-phosphate: step 4/5. Catalyzes the reversible conversion of 2-phosphoglycerate (2-PG) into phosphoenolpyruvate (PEP). It is essential for the degradation of carbohydrates via glycolysis. This is Enolase from Nitrosomonas europaea (strain ATCC 19718 / CIP 103999 / KCTC 2705 / NBRC 14298).